We begin with the raw amino-acid sequence, 188 residues long: Peptide deformylase (188 aa).

2 residues coordinate Fe cation: C107 and H149. The active site involves E150. H153 contacts Fe cation.

This sequence belongs to the polypeptide deformylase family. Fe(2+) serves as cofactor.

The catalysed reaction is N-terminal N-formyl-L-methionyl-[peptide] + H2O = N-terminal L-methionyl-[peptide] + formate. Functionally, removes the formyl group from the N-terminal Met of newly synthesized proteins. Requires at least a dipeptide for an efficient rate of reaction. N-terminal L-methionine is a prerequisite for activity but the enzyme has broad specificity at other positions. This is Peptide deformylase from Thermosynechococcus vestitus (strain NIES-2133 / IAM M-273 / BP-1).